Consider the following 339-residue polypeptide: Dihydroorotase (339 aa).

His-12 and His-14 together coordinate Zn(2+). Substrate-binding positions include 14 to 16 (HVR) and Asn-40. Positions 94, 133, 167, and 239 each coordinate Zn(2+). At Lys-94 the chain carries N6-carboxylysine. Substrate is bound at residue His-133. Asp-239 is a catalytic residue. Substrate is bound by residues His-243 and Ala-255.

It belongs to the metallo-dependent hydrolases superfamily. DHOase family. Class II DHOase subfamily. As to quaternary structure, homodimer. Zn(2+) is required as a cofactor.

It carries out the reaction (S)-dihydroorotate + H2O = N-carbamoyl-L-aspartate + H(+). Its pathway is pyrimidine metabolism; UMP biosynthesis via de novo pathway; (S)-dihydroorotate from bicarbonate: step 3/3. In terms of biological role, catalyzes the reversible cyclization of carbamoyl aspartate to dihydroorotate. In Helicobacter acinonychis (strain Sheeba), this protein is Dihydroorotase.